The following is a 118-amino-acid chain: Small ribosomal subunit protein uS13 (118 aa).

Residues 94 to 118 (SLPLRGQRTKTNARTRKGPRKPIRK) form a disordered region.

It belongs to the universal ribosomal protein uS13 family. Part of the 30S ribosomal subunit. Forms a loose heterodimer with protein S19. Forms two bridges to the 50S subunit in the 70S ribosome.

Located at the top of the head of the 30S subunit, it contacts several helices of the 16S rRNA. In the 70S ribosome it contacts the 23S rRNA (bridge B1a) and protein L5 of the 50S subunit (bridge B1b), connecting the 2 subunits; these bridges are implicated in subunit movement. Contacts the tRNAs in the A and P-sites. In Shewanella sediminis (strain HAW-EB3), this protein is Small ribosomal subunit protein uS13.